The chain runs to 908 residues: Protein translocase subunit SecA (908 aa).

Residues Q87, 105–109 (GEGKT), and D512 contribute to the ATP site. Residues 882-908 (DGEKVGRNDPCPCGSGKKYKQCHGKLT) are disordered. 4 residues coordinate Zn(2+): C892, C894, C903, and H904. Basic residues predominate over residues 898-908 (KKYKQCHGKLT).

Belongs to the SecA family. Monomer and homodimer. Part of the essential Sec protein translocation apparatus which comprises SecA, SecYEG and auxiliary proteins SecDF-YajC and YidC. Zn(2+) is required as a cofactor.

Its subcellular location is the cell inner membrane. It localises to the cytoplasm. The enzyme catalyses ATP + H2O + cellular proteinSide 1 = ADP + phosphate + cellular proteinSide 2.. Its function is as follows. Part of the Sec protein translocase complex. Interacts with the SecYEG preprotein conducting channel. Has a central role in coupling the hydrolysis of ATP to the transfer of proteins into and across the cell membrane, serving both as a receptor for the preprotein-SecB complex and as an ATP-driven molecular motor driving the stepwise translocation of polypeptide chains across the membrane. The protein is Protein translocase subunit SecA of Shewanella amazonensis (strain ATCC BAA-1098 / SB2B).